Consider the following 122-residue polypeptide: Large ribosomal subunit protein uL14 (122 aa).

This sequence belongs to the universal ribosomal protein uL14 family. In terms of assembly, part of the 50S ribosomal subunit. Forms a cluster with proteins L3 and L19. In the 70S ribosome, L14 and L19 interact and together make contacts with the 16S rRNA in bridges B5 and B8.

Binds to 23S rRNA. Forms part of two intersubunit bridges in the 70S ribosome. This Aliarcobacter butzleri (strain RM4018) (Arcobacter butzleri) protein is Large ribosomal subunit protein uL14.